We begin with the raw amino-acid sequence, 1036 residues long: Integrin alpha-9 (1036 aa).

The first 28 residues, 1 to 28 (MGGPAAARTGAGGLRALLLALVAAGVPA), serve as a signal peptide directing secretion. At 29-981 (GAYNLDAQRP…NLEPRGYVVG (953 aa)) the chain is on the extracellular side. FG-GAP repeat units follow at residues 36 to 97 (QRPV…PDRR), 109 to 175 (RGAP…AKGK), 183 to 233 (EYKK…NTYF), 234 to 290 (KLND…SGTL), 291 to 350 (IKIF…GALE), 352 to 409 (QLTL…GIVP), and 412 to 475 (SMKL…LPGS). Disulfide bonds link cysteine 88/cysteine 98, cysteine 143/cysteine 163, and cysteine 180/cysteine 195. Residue asparagine 226 is glycosylated (N-linked (GlcNAc...) asparagine). Residues aspartate 313, asparagine 315, aspartate 317, aspartate 321, aspartate 374, aspartate 376, aspartate 378, aspartate 382, aspartate 436, aspartate 438, asparagine 440, and aspartate 444 each contribute to the Ca(2+) site. The cysteines at positions 483 and 492 are disulfide-linked. Residues asparagine 494 and asparagine 515 are each glycosylated (N-linked (GlcNAc...) asparagine). Cystine bridges form between cysteine 498/cysteine 556, cysteine 621/cysteine 626, and cysteine 697/cysteine 707. A glycan (N-linked (GlcNAc...) asparagine) is linked at asparagine 808. 2 cysteine pairs are disulfide-bonded: cysteine 856-cysteine 892 and cysteine 899-cysteine 904. Residues 982 to 1002 (WIIAISLLVGILIFLLLAVLL) form a helical membrane-spanning segment. At 1003–1036 (WKMGFFRRRYKEIIEAEKNRKENEDGWDWVQKNQ) the chain is on the cytoplasmic side. A GFFKR motif motif is present at residues 1006–1010 (GFFRR).

It belongs to the integrin alpha chain family. In terms of assembly, heterodimer of an alpha and a beta subunit. Alpha-9 (ITGA9) associates with beta-1 (ITGB1). Integrin ITGA9:ITGB1 interacts with FBLN5 (via N-terminus). Integrin ITGA9:ITGB1 interacts with SPP1/OPN (via N-terminus). Integrin ITGA9:ITGB1 interacts with TNC/TNFN3 (via the 3rd Fibronectin type-III domain). Integrin ITGA9:ITGB1 interacts with SVEP1/polydom (via Sushi domain 21); thereby inhibits Ca(2+) intracellular signaling and as a result represses vasocontraction. As to expression, expressed in the media layer of the arterial wall (at protein level). Expressed in the airway epithelium, skeletal muscle, basal keratincytes, the basal epithelium of the cornea, hepatocytes, giant cells in the spleen and smooth muscle of the stomach, duodenum and veins (at protein level).

It localises to the membrane. Integrin alpha-9/beta-1 (ITGA9:ITGB1) is a receptor for VCAM1, cytotactin and osteopontin. It recognizes the sequence A-E-I-D-G-I-E-L in cytotactin. ITGA9:ITGB1 may play a crucial role in SVEP1/polydom-mediated myoblast cell adhesion. Integrin ITGA9:ITGB1 represses PRKCA-mediated L-type voltage-gated channel Ca(2+) influx and ROCK-mediated calcium sensitivity in vascular smooth muscle cells via its interaction with SVEP1, thereby inhibiting vasocontraction. The protein is Integrin alpha-9 of Mus musculus (Mouse).